We begin with the raw amino-acid sequence, 481 residues long: MQQSAFLELPKNFYELVLPEPQQNARLVTVNHSLMDELNCDLSDKQLLALASGNLTDESLINFNLIPLAQKYTGHQFGYYNPDLGDGRGLLLGQWHDKNNQAWEFHLKGAGRTPFSRRGDGRAVLRSVIREYLASEALHGLGVPTTRALAIASSQEQVQREIFEPRASLIRVTPTHIRFGHFEWAASLGKDALDALIAFVIQHHYPELAELPENEQAGALLKAVCGRTATLMAKWQAVGFNHGVMNSDNMSIIGETFDFGPYAFFDDFQIEYICNHSDVEGRYAYNQQPKIGVWNCQVLAAAFGQSVTEAEQTAALDHFVQTYNQQYVSEMNAKLGLATQQETDKDLIGDLLVLMDKQRVDFSLFFRRLAKLGHADENDLRRLLSQPEEFEPWFERYHQRVAQEALSEDKRQQRILNNNPSIILRNYIAQQIIEAAEVGNFQPLNDWVKALHSPFENHPGLAEFQQPPTPEQKGLQLSCSS.

ATP contacts are provided by Gly-85, Gly-87, Arg-88, Lys-108, Asp-120, Gly-121, Arg-171, and Arg-178. The active-site Proton acceptor is the Asp-248. Asn-249 and Asp-258 together coordinate Mg(2+). Asp-258 serves as a coordination point for ATP. Residues 458-481 (HPGLAEFQQPPTPEQKGLQLSCSS) form a disordered region.

It belongs to the SELO family. It depends on Mg(2+) as a cofactor. The cofactor is Mn(2+).

The catalysed reaction is L-seryl-[protein] + ATP = 3-O-(5'-adenylyl)-L-seryl-[protein] + diphosphate. It carries out the reaction L-threonyl-[protein] + ATP = 3-O-(5'-adenylyl)-L-threonyl-[protein] + diphosphate. It catalyses the reaction L-tyrosyl-[protein] + ATP = O-(5'-adenylyl)-L-tyrosyl-[protein] + diphosphate. The enzyme catalyses L-histidyl-[protein] + UTP = N(tele)-(5'-uridylyl)-L-histidyl-[protein] + diphosphate. The catalysed reaction is L-seryl-[protein] + UTP = O-(5'-uridylyl)-L-seryl-[protein] + diphosphate. It carries out the reaction L-tyrosyl-[protein] + UTP = O-(5'-uridylyl)-L-tyrosyl-[protein] + diphosphate. In terms of biological role, nucleotidyltransferase involved in the post-translational modification of proteins. It can catalyze the addition of adenosine monophosphate (AMP) or uridine monophosphate (UMP) to a protein, resulting in modifications known as AMPylation and UMPylation. The chain is Protein nucleotidyltransferase YdiU from Hydrogenovibrio crunogenus (strain DSM 25203 / XCL-2) (Thiomicrospira crunogena).